The sequence spans 486 residues: Histamine H1 receptor (486 aa).

Over 1 to 29 (MSFANTSSTFEDKMCEGNRTAMASPQLLP) the chain is Extracellular. N-linked (GlcNAc...) asparagine glycans are attached at residues asparagine 5 and asparagine 18. A helical transmembrane segment spans residues 30-50 (LVVVLSSISLVTVGLNLLVLY). At 51–64 (AVHSERKLHTVGNL) the chain is on the cytoplasmic side. The helical transmembrane segment at 65 to 89 (YIVSLSVADLIVGAVVMPMNILYLI) threads the bilayer. Residues 90 to 97 (MTKWSLGR) lie on the Extracellular side of the membrane. A helical transmembrane segment spans residues 98-123 (PLCLFWLSMDYVASTASIFSVFILCI). A disulfide bond links cysteine 100 and cysteine 180. Histamine contacts are provided by aspartate 107 and threonine 112. The important for agonist binding stretch occupies residues 107-112 (DYVAST). Over 124–144 (DRYRSVQQPLRYLRYRTKTRA) the chain is Cytoplasmic. Phosphothreonine is present on residues threonine 140 and threonine 142. The chain crosses the membrane as a helical span at residues 145-164 (SATILGAWFFSFLWVIPILG). The Extracellular portion of the chain corresponds to 165-188 (WHHFMPPAPELREDKCETDFYNVT). The chain crosses the membrane as a helical span at residues 189–211 (WFKIMTAIINFYLPTLLMLWFYV). Residue asparagine 198 coordinates histamine. Residues 212-415 (KIYKAVRRHC…LNRERKAAKQ (204 aa)) lie on the Cytoplasmic side of the membrane. Position 230 is a phosphoserine (serine 230). A compositionally biased stretch (basic and acidic residues) spans 241 to 253 (SDDTKEGAKKPGR). Disordered stretches follow at residues 241 to 295 (SDDT…GERE) and 310 to 379 (VAEG…RSGS). Residues serine 342 and serine 345 each carry the phosphoserine modification. The segment covering 347–365 (DQTLVDQQSFSRTTDSDTS) has biased composition (polar residues). A phosphoserine mark is found at serine 379, serine 381, serine 395, and serine 397. Residues 416 to 439 (LGFIMAAFILCWIPYFIFFMVIAF) traverse the membrane as a helical segment. The tract at residues 423–427 (FILCW) is important for agonist binding. Residue tyrosine 430 coordinates histamine. Residues cysteine 440 and cysteine 443 are joined by a disulfide bond. At 440-445 (CKSCCS) the chain is on the extracellular side. The chain crosses the membrane as a helical span at residues 446–468 (EPMHMFTIWLGYINSTLNPLIYP). Residues 469 to 486 (LCNENFKKTFKKILHIRS) lie on the Cytoplasmic side of the membrane.

The protein belongs to the G-protein coupled receptor 1 family. In terms of processing, phosphorylation at sites in the second and third cytoplasmic loops independently contribute to agonist-induced receptor down-regulation.

The protein resides in the cell membrane. G-protein-coupled receptor for histamine, a biogenic amine that functions as an immune modulator and a neurotransmitter. Through the H1 receptor, histamine mediates the contraction of smooth muscles and increases capillary permeability due to contraction of terminal venules. Also mediates neurotransmission in the central nervous system and thereby regulates circadian rhythms, emotional and locomotor activities as well as cognitive functions. The polypeptide is Histamine H1 receptor (Rattus norvegicus (Rat)).